The chain runs to 234 residues: Conidial surface nicotinamide adenine dinucleotide glycohydrolase nadA (234 aa).

Positions 1 to 20 are cleaved as a signal peptide; it reads MIFTNAILVISALLPATVLS. The tract at residues 21 to 117 is thump; sequence LQHTEDSLFP…LDTEEQPILG (97 aa). 2 disulfides stabilise this stretch: C33–C80 and C38–C50. N45, N95, and N118 each carry an N-linked (GlcNAc...) asparagine glycan. In terms of domain architecture, TNT spans 120–212; that stretch reads TLPVGMKLDR…GLIDDGYLRR (93 aa). R129 is an active-site residue. The NAD(+) site is built by F130, T136, and R148. The active site involves Q194. Ca(2+) is bound by residues S216, D219, E220, and E223.

The protein belongs to the fungal surface NADase family. Homodimer. Post-translationally, N-glycosylated.

It is found in the secreted. It carries out the reaction NAD(+) + H2O = ADP-D-ribose + nicotinamide + H(+). It catalyses the reaction NADP(+) + H2O = ADP-D-ribose 2'-phosphate + nicotinamide + H(+). With respect to regulation, the catalytic activity is positively regulated by calcium via its binding to the calcium-binding site. Its function is as follows. Conidial surface nicotinamide adenine dinucleotide glycohydrolase that cleave NAD(+) and NADP(+) but not their reduced counterparts, NADH and NADPH. Lacks both ADP-ribosyl cyclase and base exchange activity and does not mediate synthesis of calcium messengers cADPR or NAADP. Plays a role in pathogenicity by depleting the host's NAD(+) pool. This is Conidial surface nicotinamide adenine dinucleotide glycohydrolase nadA from Aspergillus fumigatus (strain ATCC MYA-4609 / CBS 101355 / FGSC A1100 / Af293) (Neosartorya fumigata).